Reading from the N-terminus, the 745-residue chain is MKESFYIEGMTCTACSSGIERSLGRKSFVKKIEVSLLNKSANIEFNENETNLDEIFKLIEKLGYSPKKTLAEEKKEFFSPNVKLALAVIFTLFVVYLSMGAMLSPSLLPESLLTINHHSNFLNACLQLIGALIVMHLGRDFYIQGFKALWHRQPNMSSLIAIGTSAALISSLWQLYLVYTNHYTDQWSYGHYYFESVCVILMFVMVGKRIENVSKDKALDAMQALMKNAPKTALKMHNNQQIEVLVDSIVVGDILKVLPGSAIAVDGEIIEGEGELDESMLSGEALPVYKKVGDKVFSGTLNSNTSFLMKATQDNKNSTLSQIIEMIHNAQSSKAEISRLADKVSSVFVPSVIAIAVLAFVVWLIIAPKPDFWWNFRTALEVFVSVLVISCPCALGLATPMSILVANQKASSLGLFFKDAKSLEKARLVNTIVFDKTGTLTNGKPVVKSIHSNIELLELLSLASSIEKSSEHVIAKGIVEYAKERNAPLKDISEVKVKTGFGISAKVDYQGAKEIIKVGNSEFFNPINTLEIKENGILVFVGRAINEKEDELLGAFVLEDLPKKGVKEHIAQIKNLGINTFLLSGDNRENVKKCALELGIDGYISNAKPQDKLNKIKELKEKGRIVMMVGDGLNDAPSLAMSDVAVVMAKGSDVSVQAADIVSFNNDIKSVYSAIKLSQATIKNIKENLFWAFCYNSVFIPLACGVLYKANIMLSPAIAGLAMSLSSVSVVLNSQRLRNFKIKDH.

The HMA domain maps to 1–67 (MKESFYIEGM…LIEKLGYSPK (67 aa)). Over 1-83 (MKESFYIEGM…KKEFFSPNVK (83 aa)) the chain is Cytoplasmic. Residues C12 and C15 each coordinate Cu cation. Residues 84–104 (LALAVIFTLFVVYLSMGAMLS) form a helical membrane-spanning segment. Residues 105-124 (PSLLPESLLTINHHSNFLNA) lie on the Extracellular side of the membrane. Residues 125–144 (CLQLIGALIVMHLGRDFYIQ) traverse the membrane as a helical segment. The Cytoplasmic portion of the chain corresponds to 145 to 151 (GFKALWH). A helical membrane pass occupies residues 152-172 (RQPNMSSLIAIGTSAALISSL). Residues 173 to 194 (WQLYLVYTNHYTDQWSYGHYYF) are Extracellular-facing. A helical transmembrane segment spans residues 195-215 (ESVCVILMFVMVGKRIENVSK). The Cytoplasmic segment spans residues 216-343 (DKALDAMQAL…KAEISRLADK (128 aa)). A helical transmembrane segment spans residues 344–366 (VSSVFVPSVIAIAVLAFVVWLII). Topologically, residues 367–379 (APKPDFWWNFRTA) are extracellular. Residues 380–397 (LEVFVSVLVISCPCALGL) traverse the membrane as a helical segment. At 398-685 (ATPMSILVAN…KLSQATIKNI (288 aa)) the chain is on the cytoplasmic side. D435 serves as the catalytic 4-aspartylphosphate intermediate. Mg(2+)-binding residues include D631 and D635. The chain crosses the membrane as a helical span at residues 686-705 (KENLFWAFCYNSVFIPLACG). Residues 706 to 716 (VLYKANIMLSP) are Extracellular-facing. The chain crosses the membrane as a helical span at residues 717–735 (AIAGLAMSLSSVSVVLNSQ). The Cytoplasmic portion of the chain corresponds to 736 to 745 (RLRNFKIKDH).

Belongs to the cation transport ATPase (P-type) (TC 3.A.3) family. Type IB subfamily.

It localises to the cell membrane. It carries out the reaction Cu(2+)(in) + ATP + H2O = Cu(2+)(out) + ADP + phosphate + H(+). Its function is as follows. Probably involved in copper export. This is Copper-transporting ATPase (copA) from Helicobacter pylori (strain J99 / ATCC 700824) (Campylobacter pylori J99).